Here is a 217-residue protein sequence, read N- to C-terminus: Putative cobalt transport protein CbiM (217 aa).

The next 6 helical transmembrane spans lie at 8–28 (LPPEWAAFWYVFAIPFLVYGA), 44–64 (LIAVSAGFIFVLSALKLPSVT), 74–94 (GIAVVFFGPAVTALLSAIVLL), 107–127 (TLGANTASMGVIGPFVGWIAF), 139–161 (VFAAAMLSDLVTYVVTSLQLALA), and 181–201 (IFAVTQVPLSIIEGVVAVMLV).

Belongs to the CbiM family. Forms an energy-coupling factor (ECF) transporter complex composed of an ATP-binding protein (A component, CbiO), a transmembrane protein (T component, CbiQ) and 2 possible substrate-capture proteins (S components, CbiM and CbiN) of unknown stoichimetry.

The protein localises to the cell membrane. The protein operates within cofactor biosynthesis; adenosylcobalamin biosynthesis. Functionally, part of the energy-coupling factor (ECF) transporter complex CbiMNOQ involved in cobalt import. The protein is Putative cobalt transport protein CbiM of Archaeoglobus fulgidus (strain ATCC 49558 / DSM 4304 / JCM 9628 / NBRC 100126 / VC-16).